Reading from the N-terminus, the 535-residue chain is Pyrichalasin C-18 hydroxylase (535 aa).

Residues 42 to 62 (LPSGTLIVLAALSLALLVAVL) traverse the membrane as a helical segment. N-linked (GlcNAc...) asparagine glycans are attached at residues N139 and N222. Heme is bound at residue C479.

This sequence belongs to the cytochrome P450 family. The cofactor is heme.

Its subcellular location is the membrane. It functions in the pathway mycotoxin biosynthesis. Cytochrome P450 monooxygenase; part of the gene cluster that mediates the biosynthesis of the mycotoxin pyrichalasin H, a tyrosine-derived cytochalasan that inhibits the growth of rice seedlings, but also inhibits lymphocyte capping and actin polymerization and alters cell morphology. Pyrichalasin H is indicated as the responsible agent for the genus-specific pathogenicity of M.grisea toward crabgrass. The first step in the pathway is catalyzed by the O-methyltransferase pyiA which methylates free tyrosine to generate the precursor O-methyltyrosine. The hybrid PKS-NRPS pyiS, assisted by the enoyl reductase pyiC, are responsible for fusion of the O-methyltyrosine precursor and the polyketide backbone. The polyketide synthase module (PKS) of pyiS is responsible for the synthesis of the polyketide backbone and the downstream nonribosomal peptide synthetase (NRPS) amidates the carboxyl end of the polyketide with the O-methyltyrosine precursor. As the NRPS A-domain demonstrates substrate tolerance, pyiS can also use phenylalanine, tyrosine and even para-chlorophenylalanine as amino acid precursor, which leads to the production of novel cytochalasans, including halogenated cytochalasans. Because pyiS lacks a designated enoylreductase (ER) domain, the required activity is provided the enoyl reductase pyiC. Reduction by the hydrolyase pyiE leads to 1,5-dihydropyrrolone, which is substrate for dehydration and intra-molecular Diels-Alder cyclization by the Diels-Alderase pyiF to yield the required isoindolone-fused macrocycle. The tailoring cytochrome P450 monooxygenases piyD and piyG catalyze the hydroxylation at C-18 and C-7, respectivily, whereas the short-chain dehydrogenase/reductase pyiH reduces the carbonyl at C-21 in preparation for the transfer of an acetyl group by the acetyltransferase pyiB. These 3 reactions whose order is not clear yet, lead to the production of O-methylpyrichalasin J, a deacetylated pyrichalasin H. Finally, pyiB to converts O-methylpyrichalasin J into the final product pyrichalasin H via acetylation of C-21. In Pyricularia grisea (Crabgrass-specific blast fungus), this protein is Pyrichalasin C-18 hydroxylase.